Consider the following 94-residue polypeptide: Small ubiquitin-related modifier 3 (94 aa).

A Glycyl lysine isopeptide (Lys-Gly) (interchain with G-Cter in SUMO) cross-link involves residue K11. Residues 15–92 (DHINLKVAGQ…IDVFQQQTGG (78 aa)) enclose the Ubiquitin-like domain. A Glycyl lysine isopeptide (Gly-Lys) (interchain with K-? in acceptor proteins) cross-link involves residue G92. Residues 93 to 94 (SC) constitute a propeptide that is removed on maturation.

It belongs to the ubiquitin family. SUMO subfamily. Interacts with sae2 and ube2i. Covalently attached to a number of proteins. In terms of processing, polymeric chains can be formed through Lys-11 cross-linking. Cleavage of precursor form by a sentrin-specific protease is necessary for function.

Its subcellular location is the cytoplasm. It is found in the nucleus. It localises to the PML body. In terms of biological role, ubiquitin-like protein which can be covalently attached to target lysines either as a monomer or as a lysine-linked polymer. Does not seem to be involved in protein degradation and may function as an antagonist of ubiquitin in the degradation process. Plays a role in a number of cellular processes such as nuclear transport, DNA replication and repair, mitosis and signal transduction. Covalent attachment to its substrates requires prior activation by the E1 complex sae1-sae2 and linkage to the E2 enzyme ube2i. The protein is Small ubiquitin-related modifier 3 (sumo3) of Danio rerio (Zebrafish).